The sequence spans 347 residues: MEDNRKKALGAALSQIERQFGKGAVMKMGDQPREAIPAVSTGSLGLDVALGIGGLPYGRIVEIYGPESSGKTTLTLQVIAEAQKQGKTCAFVDAEHALDPVYAEKLGVNVDELLVSQPDTGEQALEIADMLVRSNAVDVIIVDSVAALTPKAEIEGEMGDSHVGLQARLMSQALRKLTGNVKHANCLMVFINQIRMKIGVMFGSPETTTGGNALKFYSSVRLDIRRIGSVKDGDEVVGNETRVKVVKNKVSPPFRQAEFQIMYGKGIYHMAEVLDMGVKEGFVDKSGAWYAYNGDKIGQGKANACKFLEENLDIANEIEAKVRDKLMPKPVKKETAEAPAEANGELL.

65 to 72 (GPESSGKT) is an ATP binding site.

This sequence belongs to the RecA family.

The protein localises to the cytoplasm. Can catalyze the hydrolysis of ATP in the presence of single-stranded DNA, the ATP-dependent uptake of single-stranded DNA by duplex DNA, and the ATP-dependent hybridization of homologous single-stranded DNAs. It interacts with LexA causing its activation and leading to its autocatalytic cleavage. The sequence is that of Protein RecA from Marinobacter nauticus (strain ATCC 700491 / DSM 11845 / VT8) (Marinobacter aquaeolei).